The chain runs to 129 residues: Large ribosomal subunit protein bL20 (129 aa).

Belongs to the bacterial ribosomal protein bL20 family.

In terms of biological role, binds directly to 23S ribosomal RNA and is necessary for the in vitro assembly process of the 50S ribosomal subunit. It is not involved in the protein synthesizing functions of that subunit. This chain is Large ribosomal subunit protein bL20, found in Mycolicibacterium smegmatis (strain ATCC 700084 / mc(2)155) (Mycobacterium smegmatis).